A 210-amino-acid chain; its full sequence is Outer-membrane lipoprotein carrier protein (210 aa).

Residues 1–26 (MHMIRRAAGALAVFAVAALAAAPAWA) form the signal peptide.

The protein belongs to the LolA family. Monomer.

It localises to the periplasm. In terms of biological role, participates in the translocation of lipoproteins from the inner membrane to the outer membrane. Only forms a complex with a lipoprotein if the residue after the N-terminal Cys is not an aspartate (The Asp acts as a targeting signal to indicate that the lipoprotein should stay in the inner membrane). The polypeptide is Outer-membrane lipoprotein carrier protein (Bordetella pertussis (strain Tohama I / ATCC BAA-589 / NCTC 13251)).